The sequence spans 586 residues: Aspartate--tRNA(Asp/Asn) ligase (586 aa).

Glu-175 lines the L-aspartate pocket. The aspartate stretch occupies residues 199–202; sequence QIFK. Residue Arg-221 coordinates L-aspartate. Residues 221 to 223 and Gln-230 contribute to the ATP site; that span reads RDE. L-aspartate is bound at residue His-448. Glu-482 lines the ATP pocket. Position 489 (Arg-489) interacts with L-aspartate. An ATP-binding site is contributed by 534–537; that stretch reads GVDR.

This sequence belongs to the class-II aminoacyl-tRNA synthetase family. Type 1 subfamily. Homodimer.

The protein localises to the cytoplasm. It carries out the reaction tRNA(Asx) + L-aspartate + ATP = L-aspartyl-tRNA(Asx) + AMP + diphosphate. In terms of biological role, aspartyl-tRNA synthetase with relaxed tRNA specificity since it is able to aspartylate not only its cognate tRNA(Asp) but also tRNA(Asn). Reaction proceeds in two steps: L-aspartate is first activated by ATP to form Asp-AMP and then transferred to the acceptor end of tRNA(Asp/Asn). This is Aspartate--tRNA(Asp/Asn) ligase from Syntrophomonas wolfei subsp. wolfei (strain DSM 2245B / Goettingen).